We begin with the raw amino-acid sequence, 830 residues long: G-type lectin S-receptor-like serine/threonine-protein kinase SD1-13 (830 aa).

Positions 1-21 are cleaved as a signal peptide; sequence MGCLLILLLTLICFSLRLCLA. Positions 22 to 145 constitute a Bulb-type lectin domain; the sequence is TDVITFSSEF…TNTGDEILWE (124 aa). Topologically, residues 22–434 are extracellular; it reads TDVITFSSEF…SEFKKRTNRS (413 aa). N-linked (GlcNAc...) asparagine glycans are attached at residues Asn-40, Asn-53, and Asn-82. The region spanning 283-321 is the EGF-like; atypical domain; sequence PSTKCDTYATCGQFASCRFNPGSTPPCMCIRGFKPQSYA. 2 disulfides stabilise this stretch: Cys-287-Cys-299 and Cys-293-Cys-309. N-linked (GlcNAc...) asparagine glycosylation is found at Asn-327, Asn-384, and Asn-432. A PAN domain is found at 340–423; that stretch reads CESRDNNDGS…TGVVFYIRLA (84 aa). 2 disulfides stabilise this stretch: Cys-377–Cys-398 and Cys-381–Cys-387. The helical transmembrane segment at 435–455 threads the bilayer; it reads IVITVTLLVGAFLFAGTVVLA. Topologically, residues 456 to 830 are cytoplasmic; the sequence is LWKIAKHREK…NVSLTKITGR (375 aa). One can recognise a Protein kinase domain in the interval 512-798; the sequence is FSITNKLGQG…NLPEPKQPAF (287 aa). Residues 518–526 and Lys-540 each bind ATP; that span reads LGQGGFGAV. Position 545 is a phosphothreonine (Thr-545). Residues Ser-546 and Ser-561 each carry the phosphoserine modification. The caM-binding stretch occupies residues 601-618; that stretch reads VKQRLLDWKTRFNIIDGI. The Proton acceptor role is filled by Asp-637. A phosphoserine mark is found at Ser-641, Ser-654, and Ser-670. Phosphothreonine is present on Thr-671. Residues Ser-714, Ser-715, Ser-726, Ser-805, Ser-809, Ser-810, Ser-813, Ser-818, and Ser-823 each carry the phosphoserine modification. A disordered region spans residues 789–830; sequence NLPEPKQPAFIPRRGTSEVESSGQSDPRASINNVSLTKITGR. Positions 806–830 are enriched in polar residues; that stretch reads EVESSGQSDPRASINNVSLTKITGR. Thr-825 and Thr-828 each carry phosphothreonine.

The protein belongs to the protein kinase superfamily. Ser/Thr protein kinase family. As to quaternary structure, interacts with PUB9, PUB13 and PUB14. Binds to calmodulin (CaM) in a Ca(2+)-dependent manner. Post-translationally, autophosphorylated. As to expression, mostly expressed in rosette leaves, and, to a lower extent, in cauline leaves and stems.

It is found in the cell membrane. It catalyses the reaction L-seryl-[protein] + ATP = O-phospho-L-seryl-[protein] + ADP + H(+). The enzyme catalyses L-threonyl-[protein] + ATP = O-phospho-L-threonyl-[protein] + ADP + H(+). Functionally, receptor-like serine/threonine-protein kinase that represses the disease resistance signaling pathway triggered in response to bacterial pathogen such as Pseudomonas syringae pv. tomato. This Arabidopsis thaliana (Mouse-ear cress) protein is G-type lectin S-receptor-like serine/threonine-protein kinase SD1-13 (SD113).